The following is a 275-amino-acid chain: Large ribosomal subunit protein uL2 (275 aa).

A compositionally biased stretch (polar residues) spans 38–53 (NSKAGRNNNGRITTRH). Disordered regions lie at residues 38 to 59 (NSKA…GGHK) and 224 to 257 (AMNP…KGFR).

This sequence belongs to the universal ribosomal protein uL2 family. In terms of assembly, part of the 50S ribosomal subunit. Forms a bridge to the 30S subunit in the 70S ribosome.

In terms of biological role, one of the primary rRNA binding proteins. Required for association of the 30S and 50S subunits to form the 70S ribosome, for tRNA binding and peptide bond formation. It has been suggested to have peptidyltransferase activity; this is somewhat controversial. Makes several contacts with the 16S rRNA in the 70S ribosome. The polypeptide is Large ribosomal subunit protein uL2 (Burkholderia thailandensis (strain ATCC 700388 / DSM 13276 / CCUG 48851 / CIP 106301 / E264)).